The primary structure comprises 212 residues: Guanylate kinase (212 aa).

In terms of domain architecture, Guanylate kinase-like spans 7–187 (GLLIVLSGPS…AADRIIAIIR (181 aa)). Residue 14 to 21 (GPSGVGKA) coordinates ATP.

The protein belongs to the guanylate kinase family.

It localises to the cytoplasm. It catalyses the reaction GMP + ATP = GDP + ADP. Functionally, essential for recycling GMP and indirectly, cGMP. The polypeptide is Guanylate kinase (Onion yellows phytoplasma (strain OY-M)).